We begin with the raw amino-acid sequence, 208 residues long: Uracil phosphoribosyltransferase (208 aa).

5-phospho-alpha-D-ribose 1-diphosphate-binding positions include Arg78, Arg103, and 130–138 (DPMLATANS). Residues Ile193 and 198 to 200 (GDA) each bind uracil. Asp199 provides a ligand contact to 5-phospho-alpha-D-ribose 1-diphosphate.

This sequence belongs to the UPRTase family. It depends on Mg(2+) as a cofactor.

It catalyses the reaction UMP + diphosphate = 5-phospho-alpha-D-ribose 1-diphosphate + uracil. Its pathway is pyrimidine metabolism; UMP biosynthesis via salvage pathway; UMP from uracil: step 1/1. With respect to regulation, allosterically activated by GTP. In terms of biological role, catalyzes the conversion of uracil and 5-phospho-alpha-D-ribose 1-diphosphate (PRPP) to UMP and diphosphate. The chain is Uracil phosphoribosyltransferase from Brucella canis (strain ATCC 23365 / NCTC 10854 / RM-666).